The primary structure comprises 73 residues: MMMMFSVVSVFLMLLLLKFHDLSMGEEISLLKKVVRREESMLLSCPDLSCPTGYTCDVLTKKCKRLSDELWDH.

An N-terminal signal peptide occupies residues 1 to 25 (MMMMFSVVSVFLMLLLLKFHDLSMG). A propeptide spanning residues 26–37 (EEISLLKKVVRR) is cleaved from the precursor. 2 disulfides stabilise this stretch: C45–C56 and C50–C63.

It belongs to the scoloptoxin-04 family. In terms of tissue distribution, expressed by the venom gland.

Its subcellular location is the secreted. In terms of biological role, exhibits highly specific blockage of Kv2.1/KCNB1 (IC(50)=41.7 nM) voltage-gated potassium channels. This blockage is not associated with a significant change in steady-state activation, suggesting that this toxin acts as a channel blocker rather than a gating-modifier. Shows potential analgesic activities in formalin-induced paw licking, thermal pain, and acetic acid-induced abdominal writhing mice models. This chain is Kappa-scoloptoxin SsmTx-I, found in Scolopendra mutilans (Chinese red-headed centipede).